A 240-amino-acid polypeptide reads, in one-letter code: UDP-2,3-diacylglucosamine hydrolase (240 aa).

Mn(2+) is bound by residues Asp9, His11, Asp43, Asn81, and His116. A substrate-binding site is contributed by 81–82 (NR). Asp124, Ser162, Lys166, Lys169, and His197 together coordinate substrate. 2 residues coordinate Mn(2+): His197 and His199.

The protein belongs to the LpxH family. Requires Mn(2+) as cofactor.

Its subcellular location is the cell inner membrane. The enzyme catalyses UDP-2-N,3-O-bis[(3R)-3-hydroxytetradecanoyl]-alpha-D-glucosamine + H2O = 2-N,3-O-bis[(3R)-3-hydroxytetradecanoyl]-alpha-D-glucosaminyl 1-phosphate + UMP + 2 H(+). It functions in the pathway glycolipid biosynthesis; lipid IV(A) biosynthesis; lipid IV(A) from (3R)-3-hydroxytetradecanoyl-[acyl-carrier-protein] and UDP-N-acetyl-alpha-D-glucosamine: step 4/6. Hydrolyzes the pyrophosphate bond of UDP-2,3-diacylglucosamine to yield 2,3-diacylglucosamine 1-phosphate (lipid X) and UMP by catalyzing the attack of water at the alpha-P atom. Involved in the biosynthesis of lipid A, a phosphorylated glycolipid that anchors the lipopolysaccharide to the outer membrane of the cell. This Neisseria meningitidis serogroup A / serotype 4A (strain DSM 15465 / Z2491) protein is UDP-2,3-diacylglucosamine hydrolase.